The sequence spans 156 residues: UPF0232 protein BL0636 (156 aa).

Belongs to the UPF0232 family.

The protein is UPF0232 protein BL0636 of Bifidobacterium longum (strain NCC 2705).